The chain runs to 75 residues: Small ribosomal subunit protein bS16c (75 aa).

This sequence belongs to the bacterial ribosomal protein bS16 family.

It localises to the plastid. The protein localises to the chloroplast. In Cyanidium caldarium (Red alga), this protein is Small ribosomal subunit protein bS16c.